A 168-amino-acid chain; its full sequence is Photosystem I assembly protein Ycf3 (168 aa).

TPR repeat units follow at residues 35-68 (AFTY…EIDP), 72-105 (SYIL…NPFL), and 120-153 (GEQA…TPGN).

It belongs to the Ycf3 family.

The protein resides in the plastid. Its subcellular location is the chloroplast thylakoid membrane. Functionally, essential for the assembly of the photosystem I (PSI) complex. May act as a chaperone-like factor to guide the assembly of the PSI subunits. In Illicium oligandrum (Star anise), this protein is Photosystem I assembly protein Ycf3.